Consider the following 308-residue polypeptide: Apolipoprotein E (308 aa).

The N-terminal stretch at 1 to 18 is a signal peptide; it reads MKFLWAALVVTLLAGCRA. 8 consecutive repeat copies span residues 75–96, 97–118, 119–140, 141–162, 163–184, 185–206, 207–224, and 225–246. Residues 75–246 form an 8 X 22 AA approximate tandem repeats region; sequence LLIEETMKEV…RLDDMRDQME (172 aa). Positions 153–163 are LDL and other lipoprotein receptors binding; the sequence is HLRKLRKRLLR. 157–160 is a heparin binding site; that stretch reads LRKR. Residues 205 to 281 form a lipid-binding and lipoprotein association region; it reads AIPPSQQLRE…SWFEPLVQDM (77 aa). Position 220–227 (220–227) interacts with heparin; it reads GQKVRGRL. Residues 257–308 are homooligomerization; it reads SQVRLQAEAFQTRLKSWFEPLVQDMQRQWASLVEKVQSTLGISPSTKPSKTK. A specificity for association with VLDL region spans residues 269–281; the sequence is RLKSWFEPLVQDM.

Belongs to the apolipoprotein A1/A4/E family. In terms of assembly, homotetramer. May interact with ABCA1; functionally associated with ABCA1 in the biogenesis of HDLs. May interact with APP/A4 amyloid-beta peptide; the interaction is extremely stable in vitro but its physiological significance is unclear. May interact with MAPT. May interact with MAP2. In the cerebrospinal fluid, interacts with secreted SORL1. Interacts with PMEL; this allows the loading of PMEL luminal fragment on ILVs to induce fibril nucleation. APOE exists as multiple glycosylated and sialylated glycoforms within cells and in plasma. The extent of glycosylation and sialylation are tissue and context specific. In terms of processing, glycated in plasma VLDL. Post-translationally, phosphorylated by FAM20C in the extracellular medium.

The protein resides in the secreted. Its subcellular location is the extracellular space. The protein localises to the extracellular matrix. It is found in the extracellular vesicle. It localises to the endosome. The protein resides in the multivesicular body. Its function is as follows. APOE is an apolipoprotein, a protein associating with lipid particles, that mainly functions in lipoprotein-mediated lipid transport between organs via the plasma and interstitial fluids. APOE is a core component of plasma lipoproteins and is involved in their production, conversion and clearance. Apolipoproteins are amphipathic molecules that interact both with lipids of the lipoprotein particle core and the aqueous environment of the plasma. As such, APOE associates with chylomicrons, chylomicron remnants, very low density lipoproteins (VLDL) and intermediate density lipoproteins (IDL) but shows a preferential binding to high-density lipoproteins (HDL). It also binds a wide range of cellular receptors including the LDL receptor/LDLR and the very low-density lipoprotein receptor/VLDLR that mediate the cellular uptake of the APOE-containing lipoprotein particles. Finally, APOE also has a heparin-binding activity and binds heparan-sulfate proteoglycans on the surface of cells, a property that supports the capture and the receptor-mediated uptake of APOE-containing lipoproteins by cells. The sequence is that of Apolipoprotein E (APOE) from Pteropus vampyrus (Large flying fox).